The sequence spans 376 residues: MSTVGKVIKCKAAVLWEANKPFSLEEVEVAPPKAHEVRIKIVATGICRSDDHVVTGALAMPFPIILGHEAAGVIESVGEKVTSLKPGDAVIPLFVPQCGECRSCLSTKGNLCIKNDLSSSPTGLMADGTTRFTCKGKAIHHFVGTSTFTEYTVVHETAAAKIDSAAPLEKVCLIGCGFSTGYGAVLQTAKVEAGSTCAVFGLGGVGLSVVMGCKAAGASRIIAVDINKDKFAKAKELGATECINPKDFKKPIHEVLTEMTGQGVDYSFEVIGRIETMTAALASCHNNYGVSVIVGVPPAAQKISFDPMLIFSGRTWKGSVFGGWKSKDAVPKLVADYMKKKFVLDPLITHTLPFTKINEGFDLLRTGKSIRSVLVL.

N-acetylserine is present on Ser2. Zn(2+) is bound by residues Cys47, His68, Cys98, Cys101, Cys104, Cys112, and Cys176. NAD(+)-binding positions include 201-206 (GLGGVG), Asp225, Lys230, 294-296 (VGV), and Arg371.

It belongs to the zinc-containing alcohol dehydrogenase family. Class-I subfamily. In terms of assembly, homodimer. The cofactor is Zn(2+).

It localises to the cytoplasm. It catalyses the reaction a primary alcohol + NAD(+) = an aldehyde + NADH + H(+). The catalysed reaction is a secondary alcohol + NAD(+) = a ketone + NADH + H(+). The protein is Alcohol dehydrogenase 1 (ADH1) of Gallus gallus (Chicken).